A 635-amino-acid polypeptide reads, in one-letter code: Threonine--tRNA ligase (635 aa).

Residues 1–61 (MINIKFPDGS…NHDCELRLIT (61 aa)) form the TGS domain. Positions 242–533 (DHRKIGKALD…LIEHYAGNMP (292 aa)) are catalytic. The Zn(2+) site is built by Cys333, His384, and His510.

The protein belongs to the class-II aminoacyl-tRNA synthetase family. As to quaternary structure, homodimer. Zn(2+) is required as a cofactor.

The protein resides in the cytoplasm. The enzyme catalyses tRNA(Thr) + L-threonine + ATP = L-threonyl-tRNA(Thr) + AMP + diphosphate + H(+). Functionally, catalyzes the attachment of threonine to tRNA(Thr) in a two-step reaction: L-threonine is first activated by ATP to form Thr-AMP and then transferred to the acceptor end of tRNA(Thr). Also edits incorrectly charged L-seryl-tRNA(Thr). This chain is Threonine--tRNA ligase, found in Francisella philomiragia subsp. philomiragia (strain ATCC 25017 / CCUG 19701 / FSC 153 / O#319-036).